Consider the following 262-residue polypeptide: Type III pantothenate kinase (262 aa).

D12–A19 contacts ATP. Residues Y94 and G109–V112 each bind substrate. The Proton acceptor role is filled by D111. K(+) is bound at residue D132. T135 is an ATP binding site. T187 serves as a coordination point for substrate.

Belongs to the type III pantothenate kinase family. Homodimer. It depends on NH4(+) as a cofactor. Requires K(+) as cofactor.

The protein resides in the cytoplasm. It carries out the reaction (R)-pantothenate + ATP = (R)-4'-phosphopantothenate + ADP + H(+). Its pathway is cofactor biosynthesis; coenzyme A biosynthesis; CoA from (R)-pantothenate: step 1/5. Functionally, catalyzes the phosphorylation of pantothenate (Pan), the first step in CoA biosynthesis. The protein is Type III pantothenate kinase of Borrelia garinii subsp. bavariensis (strain ATCC BAA-2496 / DSM 23469 / PBi) (Borreliella bavariensis).